Consider the following 174-residue polypeptide: uncharacterized protein (174 aa).

Residues 1–55 (MGCVVSKSDDIKNENESRQRNQASSSQQPSSSQTPSKQIGIAAKDSEEQPQEVSY) form a disordered region. Glycine 2 carries N-myristoyl glycine lipidation. Over residues 7 to 19 (KSDDIKNENESRQ) the composition is skewed to basic and acidic residues. A compositionally biased stretch (low complexity) spans 20 to 38 (RNQASSSQQPSSSQTPSKQ).

This is an uncharacterized protein from Dictyostelium discoideum (Social amoeba).